Here is a 536-residue protein sequence, read N- to C-terminus: Putative cysteine ligase BshC (536 aa).

The protein belongs to the BshC family.

In terms of biological role, involved in bacillithiol (BSH) biosynthesis. May catalyze the last step of the pathway, the addition of cysteine to glucosamine malate (GlcN-Mal) to generate BSH. The chain is Putative cysteine ligase BshC from Anoxybacillus flavithermus (strain DSM 21510 / WK1).